Reading from the N-terminus, the 272-residue chain is Shikimate dehydrogenase (NADP(+)) (272 aa).

Shikimate-binding positions include 14 to 16 (SKS) and Thr-61. The Proton acceptor role is filled by Lys-65. Residue Glu-77 coordinates NADP(+). Positions 86 and 102 each coordinate shikimate. NADP(+) is bound by residues 126 to 130 (GAGGA), 149 to 154 (NRTVSR), and Met-213. Tyr-215 contacts shikimate. Gly-237 lines the NADP(+) pocket.

It belongs to the shikimate dehydrogenase family. Homodimer.

The catalysed reaction is shikimate + NADP(+) = 3-dehydroshikimate + NADPH + H(+). It participates in metabolic intermediate biosynthesis; chorismate biosynthesis; chorismate from D-erythrose 4-phosphate and phosphoenolpyruvate: step 4/7. Involved in the biosynthesis of the chorismate, which leads to the biosynthesis of aromatic amino acids. Catalyzes the reversible NADPH linked reduction of 3-dehydroshikimate (DHSA) to yield shikimate (SA). The polypeptide is Shikimate dehydrogenase (NADP(+)) (Escherichia coli O139:H28 (strain E24377A / ETEC)).